The chain runs to 182 residues: Methyl-coenzyme M reductase operon protein C (182 aa).

MCR is composed of three subunits: alpha, beta, and gamma. The function of proteins C and D is not known.

The sequence is that of Methyl-coenzyme M reductase operon protein C (mcrC) from Methanococcus voltae.